Consider the following 104-residue polypeptide: Large ribosomal subunit protein bL21 (104 aa).

It belongs to the bacterial ribosomal protein bL21 family. In terms of assembly, part of the 50S ribosomal subunit. Contacts protein L20.

This protein binds to 23S rRNA in the presence of protein L20. The chain is Large ribosomal subunit protein bL21 from Moorella thermoacetica (strain ATCC 39073 / JCM 9320).